A 178-amino-acid chain; its full sequence is Large ribosomal subunit protein bL17 (178 aa).

It belongs to the bacterial ribosomal protein bL17 family. In terms of assembly, part of the 50S ribosomal subunit. Contacts protein L32.

The sequence is that of Large ribosomal subunit protein bL17 from Lachnospira eligens (strain ATCC 27750 / DSM 3376 / VPI C15-48 / C15-B4) (Eubacterium eligens).